A 417-amino-acid polypeptide reads, in one-letter code: Gamma-glutamyl phosphate reductase (417 aa).

It belongs to the gamma-glutamyl phosphate reductase family.

It localises to the cytoplasm. The catalysed reaction is L-glutamate 5-semialdehyde + phosphate + NADP(+) = L-glutamyl 5-phosphate + NADPH + H(+). Its pathway is amino-acid biosynthesis; L-proline biosynthesis; L-glutamate 5-semialdehyde from L-glutamate: step 2/2. Functionally, catalyzes the NADPH-dependent reduction of L-glutamate 5-phosphate into L-glutamate 5-semialdehyde and phosphate. The product spontaneously undergoes cyclization to form 1-pyrroline-5-carboxylate. The sequence is that of Gamma-glutamyl phosphate reductase from Escherichia coli O127:H6 (strain E2348/69 / EPEC).